The following is a 90-amino-acid chain: Small ribosomal subunit protein uS19 (90 aa).

It belongs to the universal ribosomal protein uS19 family.

In terms of biological role, protein S19 forms a complex with S13 that binds strongly to the 16S ribosomal RNA. This chain is Small ribosomal subunit protein uS19, found in Hydrogenovibrio crunogenus (strain DSM 25203 / XCL-2) (Thiomicrospira crunogena).